Here is a 549-residue protein sequence, read N- to C-terminus: Lipase 4 (549 aa).

An N-terminal signal peptide occupies residues 1–15 (MKLALVLSLIVSVAA). Cys-75 and Cys-112 form a disulfide bridge. The active-site Acyl-ester intermediate is the Ser-224. Cys-283 and Cys-292 are disulfide-bonded. Catalysis depends on Glu-356, which acts as the Charge relay system. N-linked (GlcNAc...) asparagine glycosylation is present at Asn-366. The active-site Charge relay system is His-464.

It belongs to the type-B carboxylesterase/lipase family.

The enzyme catalyses a triacylglycerol + H2O = a diacylglycerol + a fatty acid + H(+). This chain is Lipase 4 (LIP4), found in Diutina rugosa (Yeast).